We begin with the raw amino-acid sequence, 419 residues long: CCA-adding enzyme (419 aa).

ATP-binding residues include glycine 8 and arginine 11. CTP-binding residues include glycine 8 and arginine 11. Mg(2+) is bound by residues aspartate 21 and aspartate 23. Positions 91, 137, and 140 each coordinate ATP. Residues arginine 91, arginine 137, and arginine 140 each contribute to the CTP site.

It belongs to the tRNA nucleotidyltransferase/poly(A) polymerase family. Bacterial CCA-adding enzyme type 2 subfamily. It depends on Mg(2+) as a cofactor.

It carries out the reaction a tRNA precursor + 2 CTP + ATP = a tRNA with a 3' CCA end + 3 diphosphate. The catalysed reaction is a tRNA with a 3' CCA end + 2 CTP + ATP = a tRNA with a 3' CCACCA end + 3 diphosphate. Its function is as follows. Catalyzes the addition and repair of the essential 3'-terminal CCA sequence in tRNAs without using a nucleic acid template. Adds these three nucleotides in the order of C, C, and A to the tRNA nucleotide-73, using CTP and ATP as substrates and producing inorganic pyrophosphate. tRNA 3'-terminal CCA addition is required both for tRNA processing and repair. Also involved in tRNA surveillance by mediating tandem CCA addition to generate a CCACCA at the 3' terminus of unstable tRNAs. While stable tRNAs receive only 3'-terminal CCA, unstable tRNAs are marked with CCACCA and rapidly degraded. The polypeptide is CCA-adding enzyme (Buchnera aphidicola subsp. Baizongia pistaciae (strain Bp)).